The sequence spans 1064 residues: Carbamoyl phosphate synthase large chain (1064 aa).

The interval 1–401 (MPKRNDIKKI…SLLKAVRSLE (401 aa)) is carboxyphosphate synthetic domain. ATP is bound by residues R129, R169, G175, G176, E208, I210, E215, G241, V242, H243, Q284, and E298. The ATP-grasp 1 domain maps to 133 to 327 (KELCESINEP…IAKMSAKIAI (195 aa)). Residues Q284, E298, and N300 each coordinate Mg(2+). Mn(2+)-binding residues include Q284, E298, and N300. The interval 402 to 546 (IGVFHNEMTE…YSTYEWENES (145 aa)) is oligomerization domain. The tract at residues 547–929 (KRSDKEKIIV…ALYKSFEAAK (383 aa)) is carbamoyl phosphate synthetic domain. The 191-residue stretch at 671 to 861 (EKALQDLDIP…MAQLATQMIL (191 aa)) folds into the ATP-grasp 2 domain. Residues R707, S746, L748, E752, G777, V778, H779, S780, Q820, and E832 each coordinate ATP. Mg(2+)-binding residues include Q820, E832, and N834. Q820, E832, and N834 together coordinate Mn(2+). The MGS-like domain maps to 930–1064 (LHMADYGSVL…QSRSFTTKNI (135 aa)). The tract at residues 930–1064 (LHMADYGSVL…QSRSFTTKNI (135 aa)) is allosteric domain.

This sequence belongs to the CarB family. Composed of two chains; the small (or glutamine) chain promotes the hydrolysis of glutamine to ammonia, which is used by the large (or ammonia) chain to synthesize carbamoyl phosphate. Tetramer of heterodimers (alpha,beta)4. The cofactor is Mg(2+). Requires Mn(2+) as cofactor.

The catalysed reaction is hydrogencarbonate + L-glutamine + 2 ATP + H2O = carbamoyl phosphate + L-glutamate + 2 ADP + phosphate + 2 H(+). The enzyme catalyses hydrogencarbonate + NH4(+) + 2 ATP = carbamoyl phosphate + 2 ADP + phosphate + 2 H(+). It functions in the pathway amino-acid biosynthesis; L-arginine biosynthesis; carbamoyl phosphate from bicarbonate: step 1/1. The protein operates within pyrimidine metabolism; UMP biosynthesis via de novo pathway; (S)-dihydroorotate from bicarbonate: step 1/3. Functionally, large subunit of the glutamine-dependent carbamoyl phosphate synthetase (CPSase). CPSase catalyzes the formation of carbamoyl phosphate from the ammonia moiety of glutamine, carbonate, and phosphate donated by ATP, constituting the first step of 2 biosynthetic pathways, one leading to arginine and/or urea and the other to pyrimidine nucleotides. The large subunit (synthetase) binds the substrates ammonia (free or transferred from glutamine from the small subunit), hydrogencarbonate and ATP and carries out an ATP-coupled ligase reaction, activating hydrogencarbonate by forming carboxy phosphate which reacts with ammonia to form carbamoyl phosphate. This is Carbamoyl phosphate synthase large chain from Lactococcus lactis subsp. cremoris (strain MG1363).